A 252-amino-acid polypeptide reads, in one-letter code: Type III pantothenate kinase (252 aa).

Residue 6-13 coordinates ATP; the sequence is DIGNTSTA. 104-107 serves as a coordination point for substrate; sequence GADR. The active-site Proton acceptor is Asp106. Residue Asp128 coordinates K(+). ATP is bound at residue Thr131. Residue Thr183 participates in substrate binding.

This sequence belongs to the type III pantothenate kinase family. As to quaternary structure, homodimer. NH4(+) serves as cofactor. The cofactor is K(+).

Its subcellular location is the cytoplasm. It carries out the reaction (R)-pantothenate + ATP = (R)-4'-phosphopantothenate + ADP + H(+). The protein operates within cofactor biosynthesis; coenzyme A biosynthesis; CoA from (R)-pantothenate: step 1/5. Its function is as follows. Catalyzes the phosphorylation of pantothenate (Pan), the first step in CoA biosynthesis. The protein is Type III pantothenate kinase of Thermus thermophilus (strain ATCC 27634 / DSM 579 / HB8).